We begin with the raw amino-acid sequence, 465 residues long: Type II restriction enzyme BsuMI component YdjA (465 aa).

As to quaternary structure, bsuMI restriction activity requires YdiR, YdiS and YdjA.

The catalysed reaction is Endonucleolytic cleavage of DNA to give specific double-stranded fragments with terminal 5'-phosphates.. A P subtype restriction enzyme that recognizes the double-stranded sequence 5'-CTCGAG-3'; the cleavage site is unknown. This is Type II restriction enzyme BsuMI component YdjA (ydjA) from Bacillus subtilis (strain 168).